A 649-amino-acid polypeptide reads, in one-letter code: Acetyl-coenzyme A synthetase (649 aa).

CoA is bound by residues 190-193 (RGGR) and Thr-310. ATP contacts are provided by residues 386-388 (GEP), 410-415 (DTWWQT), Asp-499, and Arg-514. Ser-522 lines the CoA pocket. Arg-525 contributes to the ATP binding site. Positions 536, 538, and 541 each coordinate Mg(2+). Arg-583 is a binding site for CoA. Position 608 is an N6-acetyllysine (Lys-608).

It belongs to the ATP-dependent AMP-binding enzyme family. Mg(2+) serves as cofactor. In terms of processing, acetylated. Deacetylation by the SIR2-homolog deacetylase activates the enzyme.

The catalysed reaction is acetate + ATP + CoA = acetyl-CoA + AMP + diphosphate. Catalyzes the conversion of acetate into acetyl-CoA (AcCoA), an essential intermediate at the junction of anabolic and catabolic pathways. AcsA undergoes a two-step reaction. In the first half reaction, AcsA combines acetate with ATP to form acetyl-adenylate (AcAMP) intermediate. In the second half reaction, it can then transfer the acetyl group from AcAMP to the sulfhydryl group of CoA, forming the product AcCoA. This is Acetyl-coenzyme A synthetase from Methylorubrum extorquens (strain PA1) (Methylobacterium extorquens).